The chain runs to 155 residues: Aspartate carbamoyltransferase regulatory chain (155 aa).

Zn(2+)-binding residues include cysteine 109, cysteine 114, cysteine 138, and cysteine 141.

It belongs to the PyrI family. As to quaternary structure, contains catalytic and regulatory chains. Requires Zn(2+) as cofactor.

Involved in allosteric regulation of aspartate carbamoyltransferase. The sequence is that of Aspartate carbamoyltransferase regulatory chain from Vibrio cholerae serotype O1 (strain ATCC 39541 / Classical Ogawa 395 / O395).